The sequence spans 1384 residues: Protein Gawky (1384 aa).

Disordered regions lie at residues Met1–Gly99, Asn148–Gly227, Thr263–Thr335, and Val447–Ser501. The tract at residues Met1–Thr205 is required for interaction with AGO1. Sufficient for miRNA-mediated silencing stretches follow at residues Met1–Ser605 and Ser605–Leu830. Positions His15 to Val24 are enriched in polar residues. Positions Ser150 to Gly171 are enriched in low complexity. Positions Thr205–Lys490 are minimal N-terminal region required for miRNA-mediated silencing. The segment covering Asp208–Pro225 has biased composition (basic and acidic residues). Composition is skewed to polar residues over residues Ala449–Ser475 and Gly485–Ser501. In terms of domain architecture, UBA spans Ile547–Asn588. 7 disordered regions span residues Ala607–Ser626, Gln809–His841, Thr889–Trp942, Glu962–Ser1022, Thr1052–Thr1102, Ser1188–Thr1221, and Gly1318–Arg1368. Over residues Gln809–Pro826 the composition is skewed to low complexity. The segment at Tyr862–Gly1115 is not required for interaction with AGO1 or miRNAs or for localization to P-bodies but necessary for miRNA-mediated silencing and for interaction with pAbp. Over residues Thr898–Arg924 the composition is skewed to polar residues. The segment at Lys940–Asn1215 is sufficient for miRNA-mediated silencing. The span at Ser1010–Ser1022 shows a compositional bias: low complexity. The segment covering Thr1052–Arg1061 has biased composition (polar residues). A compositionally biased stretch (low complexity) spans Thr1068 to Thr1084. One can recognise an RRM domain in the interval Ser1117–Glu1189. Positions Ser1188 to Pro1203 are enriched in polar residues. The not required for interaction with AGO1 or miRNAs or for localization to P-bodies but necessary for miRNA-mediated silencing, dissociation from AGO1 and miRNAs and interaction with pAbp stretch occupies residues Pro1200–Asp1384. Residues Thr1211–Gly1220 are compositionally biased toward gly residues. Positions Gly1318–Thr1349 are enriched in low complexity. Positions Trp1350 to Pro1365 are enriched in polar residues.

The protein belongs to the GW182 family. As to quaternary structure, component of the miRNA-directed RNA-induced silencing complex (miRISC), composed of at least AGO1 and gw, which bind mature miRNAs and targets the selective destruction of homologous RNAs. Interacts (via N-terminal region) with AGO1 (via Piwi domain); the interaction is essential for localization of AGO1 in P-bodies and for miRNA-mediated silencing. Interacts with pAbp/PABPC1; this interaction interferes with the binding of pAbp to eIF4G and is required for miRNA-mediated silencing. Interacts with CCR4-NOT complex members Not1, Rga/NOT2, twin/CCR4, Pop2 and NOT3/5 and with PAN complex members CG8232/PAN2 and CG11486/PAN3.

Its subcellular location is the cytoplasm. The protein resides in the P-body. Functionally, required for gene silencing mediated by micro-RNAs (miRNAs). Silences both polyadenylated and deadenylated mRNAs. Required for miRNA-mediated translational repression and mRNA decay. Not required for miRNA target recognition. Necessary to initiate but not to maintain silencing. Promotes mRNA deadenylation through the recruitment of the CCR4-NOT and PAN complexes and promotes decapping by the DCP1-DCP2 complex. Dissociates from silenced mRNAs after deadenylation. Required for completion of nuclear divisions during early embryonic development. The protein is Protein Gawky of Drosophila melanogaster (Fruit fly).